A 380-amino-acid polypeptide reads, in one-letter code: Cytochrome b (380 aa).

4 helical membrane-spanning segments follow: residues 34–54 (FGSL…LLAM), 78–99 (WLIR…YLHI), 114–134 (WNTG…GYVL), and 179–199 (FFAL…IHLT). Heme b-binding residues include histidine 84 and histidine 98. Residues histidine 183 and histidine 197 each coordinate heme b. Position 202 (histidine 202) interacts with a ubiquinone. Helical transmembrane passes span 227-247 (SKDI…ALLS), 289-309 (LGGV…PFLH), 321-341 (LSQA…WIGS), and 348-368 (FIII…ILLP).

This sequence belongs to the cytochrome b family. As to quaternary structure, the cytochrome bc1 complex contains 11 subunits: 3 respiratory subunits (MT-CYB, CYC1 and UQCRFS1), 2 core proteins (UQCRC1 and UQCRC2) and 6 low-molecular weight proteins (UQCRH/QCR6, UQCRB/QCR7, UQCRQ/QCR8, UQCR10/QCR9, UQCR11/QCR10 and a cleavage product of UQCRFS1). This cytochrome bc1 complex then forms a dimer. It depends on heme b as a cofactor.

The protein resides in the mitochondrion inner membrane. Functionally, component of the ubiquinol-cytochrome c reductase complex (complex III or cytochrome b-c1 complex) that is part of the mitochondrial respiratory chain. The b-c1 complex mediates electron transfer from ubiquinol to cytochrome c. Contributes to the generation of a proton gradient across the mitochondrial membrane that is then used for ATP synthesis. The protein is Cytochrome b (MT-CYB) of Phalcoboenus australis (Striated caracara).